A 446-amino-acid chain; its full sequence is Forkhead box protein F2 (446 aa).

Over residues 1–18 (MSTEGGPPPPPPRPPPAP) the composition is skewed to pro residues. A disordered region spans residues 1 to 97 (MSTEGGPPPP…TKKATSGLRR (97 aa)). A compositionally biased stretch (low complexity) spans 45-78 (STSSSSSSSSASCASSSSNSVSASAGACKSAASS). The segment at residues 100–194 (KPPYSYIALI…EEGSFRRRPR (95 aa)) is a DNA-binding region (fork-head). 3 disordered regions span residues 257–278 (AGAP…HMSP), 304–325 (GGGG…SPAM), and 340–371 (AHWS…GLHP). A compositionally biased stretch (basic residues) spans 263-274 (AHPHHLHHHHVP). Residues 311 to 325 (GPDSSSSPVPSSPAM) show a composition bias toward low complexity.

In terms of assembly, interacts with the transcription factors TBP and TFIIB. In terms of tissue distribution, uniquely expressed in the bronchiolar epithelium and in type II pneumocytes.

The protein localises to the nucleus. Its function is as follows. Probable transcription activator for a number of lung-specific genes. Mediates up-regulation of the E3 ligase IRF2BPL and drives ubiquitination and degradation of CTNNB1. In Mus musculus (Mouse), this protein is Forkhead box protein F2 (Foxf2).